Consider the following 65-residue polypeptide: Weak neurotoxin 6 (65 aa).

Intrachain disulfides connect Cys-3-Cys-24, Cys-6-Cys-11, Cys-17-Cys-42, Cys-46-Cys-57, and Cys-58-Cys-63.

It belongs to the three-finger toxin family. Ancestral subfamily. Orphan group II sub-subfamily. In terms of tissue distribution, expressed by the venom gland.

The protein localises to the secreted. Binds with low affinity to muscular (alpha-1-beta-1-delta-epsilon/CHRNA1-CHRNB1-CHRND-CHRNE) and very low affinity to neuronal (alpha-7/CHRNA7) nicotinic acetylcholine receptor (nAChR). The chain is Weak neurotoxin 6 from Naja naja (Indian cobra).